A 204-amino-acid polypeptide reads, in one-letter code: Ribonuclease HII (204 aa).

An RNase H type-2 domain is found at 1 to 197 (MTLGIDEAGR…KNRILNPKLL (197 aa)). Asp6, Glu7, and Asp103 together coordinate a divalent metal cation.

The protein belongs to the RNase HII family. The cofactor is Mn(2+). Mg(2+) serves as cofactor.

Its subcellular location is the cytoplasm. The enzyme catalyses Endonucleolytic cleavage to 5'-phosphomonoester.. Endonuclease that specifically degrades the RNA of RNA-DNA hybrids. The polypeptide is Ribonuclease HII (Helicobacter pylori (strain HPAG1)).